A 1336-amino-acid chain; its full sequence is Immunoglobulin superfamily member 1 (1336 aa).

Residues 1 to 28 (MTLDRPGEGATMLKTFTVLLFCIRMSLG) form the signal peptide. The Extracellular segment spans residues 29-518 (MTSIVMDPQP…GYLTWNYVLN (490 aa)). 5 consecutive Ig-like C2-type domains span residues 38-122 (PELW…KVLE), 137-222 (QAET…LVVA), 226-312 (PKPT…SDVL), 321-408 (PKTW…PSHN), and 419-500 (PKPS…HRSE). Asn53 carries N-linked (GlcNAc...) asparagine glycosylation. The cysteines at positions 58 and 106 are disulfide-linked. A disulfide bridge links Cys248 with Cys296. N-linked (GlcNAc...) asparagine glycosylation is found at Asn338, Asn374, and Asn381. Disulfide bonds link Cys343-Cys392 and Cys441-Cys484. The helical transmembrane segment at 519-539 (EAIRLSLIMQLVALLLVVLWI) threads the bilayer. Over 540-559 (RWKCRRLRIREAWLLGTAQG) the chain is Cytoplasmic. The chain crosses the membrane as a helical span at residues 560-580 (VTMLFIVTALLCCGLCNGVLI). The Extracellular segment spans residues 581-1336 (EETEIVMPTP…RISVELPVPI (756 aa)). 7 Ig-like C2-type domains span residues 589–677 (TPKP…ALEL), 686–760 (PVIS…RPFK), 777–869 (PKPF…LVVT), 873–958 (PKPT…YLSM), 965–1060 (TDTF…ELLV), 1065–1150 (PKPS…NHSD), and 1161–1242 (PKPS…EPSD). N-linked (GlcNAc...) asparagine glycosylation is found at Asn607, Asn747, Asn798, Asn846, Asn939, Asn986, Asn1027, and Asn1082. Cysteines 703 and 750 form a disulfide. 2 cysteine pairs are disulfide-bonded: Cys799–Cys849 and Cys895–Cys942. A disulfide bridge links Cys1087 with Cys1134. Residues Asn1147 and Asn1223 are each glycosylated (N-linked (GlcNAc...) asparagine). The cysteines at positions 1183 and 1226 are disulfide-linked. Residues 1308–1336 (CNQEGEPGTPANSPSSTSQRISVELPVPI) form a disordered region. The span at 1317 to 1328 (PANSPSSTSQRI) shows a compositional bias: polar residues.

Interacts with INHA. In PubMed:12385827 does not interact with INHA; standard receptor binding assay. Interacts with ACVR1B; the interaction appears to be ligand-dependent as it is diminished by inhibin B and activin A. Interacts with ACVR2A, ACVR2B, ACVRL1 and BMPR1B. Interacts with HECTD1. In terms of tissue distribution, highly expressed in pancreas, testis and fetal liver. Moderately expressed in heart, prostate and small intestine. Expressed at very low levels in brain, thymus, ovary, colon, fetal lung and fetal kidney. Expressed in muscle. Isoform 3 is expressed in pituitary gland.

It is found in the membrane. It localises to the secreted. Its function is as follows. Seems to be a coreceptor in inhibin signaling, but seems not to be a high-affinity inhibin receptor. Antagonizes activin A signaling in the presence or absence of inhibin B. Necessary to mediate a specific antagonistic effect of inhibin B on activin-stimulated transcription. The sequence is that of Immunoglobulin superfamily member 1 (IGSF1) from Homo sapiens (Human).